Reading from the N-terminus, the 490-residue chain is AP-5 complex subunit mu-1 (490 aa).

Positions 206–476 (KAQISISITE…LISSDYYIWN (271 aa)) constitute an MHD domain.

It belongs to the adaptor complexes medium subunit family. In terms of assembly, probably part of the adaptor protein complex 5 (AP-5) a tetramer composed of AP5B1, AP5M1, AP5S1 and AP5Z1. In terms of tissue distribution, widely expressed, including in small intestine and testis. In small intestine, highly expressed in cytoplasm of villi epithelial cells and internal glands. In testis, selectively expressed in maturing sperm cells (at protein level).

Its subcellular location is the cytoplasm. It is found in the cytosol. It localises to the late endosome membrane. The protein resides in the lysosome membrane. As part of AP-5, a probable fifth adaptor protein complex it may be involved in endosomal transport. The chain is AP-5 complex subunit mu-1 (Ap5m1) from Mus musculus (Mouse).